Consider the following 253-residue polypeptide: MKSASKQKIIQPVDKNLDQVYQVSTMVSLLDGIYDGDFYMSEAKEHGDFGIGTFNRLDGELIGFDGEFYRLRSDGKAYPVQGSDCSPFCSLAFFRPDIYHEIKQRMPLEAFEEEMKRIMPSENLFYAIRMDGTFKKVKTRTVELQEKPYVPMVDAVKSQPIFDFNDITGTIVGFWTPQYANGIAVSGFHLHFIDEDRNVGGHVFDYEIEECTVQISQKLNMNLRLPNTQDFFQADFNKHDLAAGIEAAEGNPE.

It belongs to the alpha-acetolactate decarboxylase family.

It carries out the reaction (2S)-2-acetolactate + H(+) = (R)-acetoin + CO2. It participates in polyol metabolism; (R,R)-butane-2,3-diol biosynthesis; (R,R)-butane-2,3-diol from pyruvate: step 2/3. Functionally, converts acetolactate into acetoin. The polypeptide is Alpha-acetolactate decarboxylase (alsD) (Bacillus licheniformis (strain ATCC 14580 / DSM 13 / JCM 2505 / CCUG 7422 / NBRC 12200 / NCIMB 9375 / NCTC 10341 / NRRL NRS-1264 / Gibson 46)).